The following is a 227-amino-acid chain: Glial cell line-derived neurotrophic factor (227 aa).

The first 19 residues, 1-19, serve as a signal peptide directing secretion; sequence MKLWAILAVCILLLSSVSS. A propeptide spanning residues 20–93 is cleaved from the precursor; the sequence is IPLPSNWLAG…EFIQDTIKRL (74 aa). Disordered regions lie at residues 32 to 61 and 93 to 113; these read RSHL…ANMA and LKRS…QSLA. 3 cysteine pairs are disulfide-bonded: Cys134–Cys195, Cys161–Cys224, and Cys165–Cys226. Residues Asn142 and Asn178 are each glycosylated (N-linked (GlcNAc...) asparagine).

The protein belongs to the TGF-beta family. GDNF subfamily. In terms of assembly, homodimer; disulfide-linked. Interacts with GFRA1 coreceptor and RET: forms a 2:2:2 ternary complex composed of GDNF ligand, GFRA1 and RET receptor. From stage 22, expressed in somites and the pronephros. At stage 24 and 26, expressed in the pharyngeal arches I-III. At stage 31, expression in the eye, central nervous system and pharyngeal arches IV and V increases. Up to stage 34, expression becomes intense at the oral cavity and lateral line structures. At this stage, expression weakens in the pharyngeal arches, and increases in the epibranchial arches. Expressed in the digestive tract in stage 34 embryos.

The protein localises to the secreted. In terms of biological role, neurotrophic factor that enhances survival and morphological differentiation of dopaminergic neurons and increases their high-affinity dopamine uptake. Acts by binding to its coreceptor, GFRA1, leading to autophosphorylation and activation of the RET receptor. The protein is Glial cell line-derived neurotrophic factor of Xenopus laevis (African clawed frog).